The sequence spans 452 residues: GTPase Der (452 aa).

2 EngA-type G domains span residues 4-169 (PVVA…PPQD) and 177-352 (IQMA…EQHR). GTP-binding positions include 10 to 17 (GRPNVGKS), 57 to 61 (DTGGL), 120 to 123 (NKCE), 183 to 190 (GRPNVGKS), 230 to 234 (DTAGI), and 295 to 298 (NKWD). Residues 353–438 (RRVTTAVVNE…PVRLFWRGKQ (86 aa)) form the KH-like domain.

It belongs to the TRAFAC class TrmE-Era-EngA-EngB-Septin-like GTPase superfamily. EngA (Der) GTPase family. In terms of assembly, associates with the 50S ribosomal subunit.

GTPase that plays an essential role in the late steps of ribosome biogenesis. This chain is GTPase Der, found in Synechococcus sp. (strain RCC307).